The chain runs to 504 residues: Signal transduction histidine-protein kinase/phosphatase MprB (504 aa).

Topologically, residues 1–26 (MWWFRRRDRAPLRATSSLSLRWRVML) are cytoplasmic. Residues 27-47 (LAMSMVAMVVVLMSFAVYAVI) traverse the membrane as a helical segment. Over 48-163 (SAALYSDIDN…PTEAVMNKLR (116 aa)) the chain is Extracellular. A helical transmembrane segment spans residues 164–184 (WVLLIVGGIGVAVAAVAGGMV). Over 185 to 504 (TRAGLRPVGR…SVESQSTRAT (320 aa)) the chain is Cytoplasmic. In terms of domain architecture, HAMP spans 186–238 (RAGLRPVGRLTEAAERVARTDDLRPIPVFGSDELARLTEAFNLMLRALAESRE). One can recognise a Histidine kinase domain in the interval 246-466 (DAGHELRTPL…SIYVLLPGRR (221 aa)). Position 249 is a phosphohistidine; by autocatalysis (His249). The interval 471-504 (QLPGATAGARSTDIENSRGSANVISVESQSTRAT) is disordered. A compositionally biased stretch (polar residues) spans 487–504 (SRGSANVISVESQSTRAT).

Mg(2+) is required as a cofactor. Mn(2+) serves as cofactor. Post-translationally, autophosphorylated.

Its subcellular location is the cell membrane. The catalysed reaction is ATP + protein L-histidine = ADP + protein N-phospho-L-histidine.. Its function is as follows. Member of the two-component regulatory system MprB/MprA which contributes to maintaining a balance among several systems involved in stress resistance and is required for establishment and maintenance of persistent infection in the host. In response to environmental signals MprB acts both as a membrane-associated protein kinase that undergoes autophosphorylation and subsequently transfers the phosphate to MprA, and a protein phosphatase that dephosphorylates phospho-MprA. This is Signal transduction histidine-protein kinase/phosphatase MprB (mprB) from Mycobacterium tuberculosis (strain ATCC 25177 / H37Ra).